A 464-amino-acid chain; its full sequence is Cytoplasmic tRNA 2-thiolation protein 2 (464 aa).

This sequence belongs to the CTU2/NCS2 family.

Its subcellular location is the cytoplasm. It participates in tRNA modification; 5-methoxycarbonylmethyl-2-thiouridine-tRNA biosynthesis. Functionally, plays a central role in 2-thiolation of mcm(5)S(2)U at tRNA wobble positions of tRNA(Lys), tRNA(Glu) and tRNA(Gln). May act by forming a heterodimer with NCS6/CTU1 that ligates sulfur from thiocarboxylated URM1 onto the uridine of tRNAs at wobble position. In Oryza sativa subsp. indica (Rice), this protein is Cytoplasmic tRNA 2-thiolation protein 2.